Reading from the N-terminus, the 1592-residue chain is ABC transporter ATP-binding protein/permease VMR1 (1592 aa).

The Vacuolar segment spans residues 1–33; it reads MGTDPLIIRNNGSFWEVDDFTRLGRTQLLSYYL. Asn-11 is a glycosylation site (N-linked (GlcNAc...) asparagine). A helical transmembrane segment spans residues 34 to 54; the sequence is PLAIIASIGIFALCRSGLSRY. At 55–74 the chain is on the cytoplasmic side; the sequence is VRSAECDLVNEYLFGAQEER. Residues 75-95 form a helical membrane-spanning segment; it reads KEDNSIERLLRNSNTQANYVN. Over 96-100 the chain is Vacuolar; the sequence is VKKQG. The chain crosses the membrane as a helical span at residues 101–121; that stretch reads RILKLRHFDITTIDVKQIDAK. The Cytoplasmic portion of the chain corresponds to 122 to 131; the sequence is NHGGLTFSRP. Residues 132 to 152 form a helical membrane-spanning segment; it reads STSDHLRKSSEIVLMSLQIIG. The Vacuolar portion of the chain corresponds to 153-170; that stretch reads LSFLRVTKINIELTNRDV. The chain crosses the membrane as a helical span at residues 171–191; it reads TTLLLFWLILLSLSILRVYKR. Residues 192-329 lie on the Cytoplasmic side of the membrane; that stretch reads STNLWAICFT…NKHINNLTLA (138 aa). A helical transmembrane segment spans residues 330 to 350; the sequence is LFESFKTYLLIGMLWVLVNSI. Positions 338 to 632 constitute an ABC transmembrane type-1 1 domain; it reads LLIGMLWVLV…LSNMLSFINQ (295 aa). Topologically, residues 351–379 are vacuolar; sequence VNLLPTILMKRFLEIVDNPNRSSSCMNLA. An N-linked (GlcNAc...) asparagine glycan is attached at Asn-370. The helical transmembrane segment at 380–400 threads the bilayer; the sequence is WLYIIGMFICRLTLAICNSQG. The Cytoplasmic portion of the chain corresponds to 401 to 465; sequence QFVSDKICLR…SFKVSELANY (65 aa). A helical membrane pass occupies residues 466-486; sequence LYVTVQAVIMIIVVVGLLFNF. Residues 487-489 are Vacuolar-facing; it reads LGV. Residues 490 to 510 traverse the membrane as a helical segment; sequence SAFAGISIILVMFPLNFLLAN. Residues 511 to 572 are Cytoplasmic-facing; that stretch reads LLGKFQKQTL…SLLKKSLVWS (62 aa). The helical transmembrane segment at 573 to 593 threads the bilayer; that stretch reads VTSFLWFVTPTLVTGVTFAIC. The Vacuolar segment spans residues 594-614; that stretch reads TFVQHEDLNAPLAFTTLSLFT. A helical membrane pass occupies residues 615–635; it reads LLKTPLDQLSNMLSFINQSKV. Topologically, residues 636 to 989 are cytoplasmic; that stretch reads SLKRISDFLR…ALTALFALYI (354 aa). The ABC transporter 1 domain occupies 664–908; it reads IEFKNATLTW…GLFKEKYVQL (245 aa). ATP is bound at residue 702-709; the sequence is GSTGSGKS. The region spanning 981–1282 is the ABC transmembrane type-1 2 domain; it reads LTALFALYIT…LVRLYSTFEM (302 aa). Residues 990–1010 traverse the membrane as a helical segment; it reads TAQILFISQSWWIRHWVNDTN. Over 1011–1051 the chain is Vacuolar; the sequence is VRINAPGFAMDTLPLKGMTDSSKNKHNAFYYLTVYFLIGII. Residues 1052-1072 traverse the membrane as a helical segment; that stretch reads QAMLGGFKTMMTFLSGMRASR. The Cytoplasmic portion of the chain corresponds to 1073 to 1115; sequence KIFNNLLDLVLHAQIRFFDVTPVGRIMNRFSKDIEGVDQELIP. The helical transmembrane segment at 1116–1136 threads the bilayer; that stretch reads YLEVTIFCLIQCASIIFLITV. Residue Ile-1137 is a topological domain, vacuolar. A helical membrane pass occupies residues 1138 to 1158; the sequence is TPRFLTVAVIVFVLYFFVGKW. The Cytoplasmic segment spans residues 1159–1229; it reads YLTASRELKR…VTVKWFSFRV (71 aa). The helical transmembrane segment at 1230–1250 threads the bilayer; that stretch reads DMIGAFIVLASGSFILLNIAN. At 1251 to 1252 the chain is on the vacuolar side; that stretch reads ID. The chain crosses the membrane as a helical span at residues 1253–1273; that stretch reads SGLAGISLTYAILFTDGALWL. At 1274-1592 the chain is on the cytoplasmic side; sequence VRLYSTFEMN…IAKQSSKMMK (319 aa). One can recognise an ABC transporter 2 domain in the interval 1323 to 1572; the sequence is IEIENLSLRY…ERGIFYSMCR (250 aa). ATP is bound at residue 1357–1364; the sequence is GRTGAGKS.

The protein belongs to the ABC transporter superfamily. ABC transporter which may be involved in multidrug resistance.

It is found in the vacuole membrane. The sequence is that of ABC transporter ATP-binding protein/permease VMR1 (VMR1) from Saccharomyces cerevisiae (strain ATCC 204508 / S288c) (Baker's yeast).